A 622-amino-acid chain; its full sequence is DNA polymerase II small subunit (622 aa).

Positions 76-113 (ISTGEGSQKVPDHEELEKITNESSVESSISTGETPKTE) are disordered. Residues 85-95 (VPDHEELEKIT) are compositionally biased toward basic and acidic residues. Positions 96–109 (NESSVESSISTGET) are enriched in polar residues.

Belongs to the DNA polymerase delta/II small subunit family. In terms of assembly, heterodimer of a large subunit and a small subunit.

The enzyme catalyses DNA(n) + a 2'-deoxyribonucleoside 5'-triphosphate = DNA(n+1) + diphosphate. It carries out the reaction Exonucleolytic cleavage in the 3'- to 5'-direction to yield nucleoside 5'-phosphates.. In terms of biological role, possesses two activities: a DNA synthesis (polymerase) and an exonucleolytic activity that degrades single-stranded DNA in the 3' to 5' direction. Has a template-primer preference which is characteristic of a replicative DNA polymerase. The protein is DNA polymerase II small subunit (polB) of Pyrococcus horikoshii (strain ATCC 700860 / DSM 12428 / JCM 9974 / NBRC 100139 / OT-3).